We begin with the raw amino-acid sequence, 525 residues long: Transcriptional regulatory protein TOD6 (525 aa).

Residues 22-82 are disordered; sequence GFSILSKHPH…NNPSSWDPSD (61 aa). Residues 35–47 are compositionally biased toward polar residues; the sequence is LVHSHSLSHTNAK. The segment covering 61-71 has biased composition (basic and acidic residues); sequence STNKEEAESLK. The 58-residue stretch at 67 to 124 folds into the HTH myb-type domain; sequence AESLKKNNPSSWDPSDDIKLRHLKEIKNLGWKEIAHHFPNRTPNACQFRWRRLKSGNL. The segment at residues 97-120 is a DNA-binding region (H-T-H motif); that stretch reads WKEIAHHFPNRTPNACQFRWRRLK. The residue at position 280 (S280) is a Phosphoserine. The disordered stretch occupies residues 283-308; it reads PSTQIPHSTTKTRKNSHSVISSRRSS. Low complexity predominate over residues 299-308; that stretch reads HSVISSRRSS. S333, S341, and S366 each carry phosphoserine. The disordered stretch occupies residues 451–510; sequence TNEGCKDEEEEDDIDPLHKENGINTPSQQSQNYGMLEAKHDNPKSSELSSMTSANDIRNE. Polar residues-rich tracts occupy residues 472-483 and 495-506; these read GINTPSQQSQNY and SSELSSMTSAND.

It belongs to the DOT6 family. In terms of assembly, component of the RPD3C(L) complex composed of at least ASH1, CTI6, DEP1, DOT6, PHO23, RPD3, RXT2, RXT3, SAP30, SDS3, SIN3, TOD6; UME1 and UME6.

Its subcellular location is the cytoplasm. It localises to the nucleus. Component of the RPD3 histone deacetylase complex RPD3C(L) responsible for the deacetylation of lysine residues on the N-terminal part of the core histones (H2A, H2B, H3 and H4). Histone deacetylation gives a tag for epigenetic repression and plays an important role in transcriptional regulation, cell cycle progression and developmental events. TOD6 binds to sequences containing the core CGATG, which resembles the PAC (Polymerase A and C) motif. This Saccharomyces cerevisiae (strain ATCC 204508 / S288c) (Baker's yeast) protein is Transcriptional regulatory protein TOD6 (TOD6).